The chain runs to 332 residues: Methionine synthase (332 aa).

The Zn(2+) site is built by His-211, Cys-213, and Cys-296.

Belongs to the archaeal MetE family. Requires Zn(2+) as cofactor.

The protein operates within amino-acid biosynthesis; L-methionine biosynthesis via de novo pathway. Its function is as follows. Catalyzes the transfer of a methyl group to L-homocysteine resulting in methionine formation. The physiological methyl donor is unknown. In Saccharolobus solfataricus (strain ATCC 35092 / DSM 1617 / JCM 11322 / P2) (Sulfolobus solfataricus), this protein is Methionine synthase.